Consider the following 640-residue polypeptide: Chaperone protein DnaK (640 aa).

At threonine 199 the chain carries Phosphothreonine; by autocatalysis. A disordered region spans residues 603-640 (YTQQAEEPQPQKEEGKAAEEDVVDAEFEEVKEDKNKAS). Over residues 611–621 (QPQKEEGKAAE) the composition is skewed to basic and acidic residues. The segment covering 622–632 (EDVVDAEFEEV) has biased composition (acidic residues).

The protein belongs to the heat shock protein 70 family.

Acts as a chaperone. The sequence is that of Chaperone protein DnaK from Nitrosococcus oceani (strain ATCC 19707 / BCRC 17464 / JCM 30415 / NCIMB 11848 / C-107).